The following is a 261-amino-acid chain: Uridine-cytidine kinase 2 (261 aa).

Residues 1–16 (MAGDSEQTLQNHQQPN) show a composition bias toward polar residues. The interval 1-24 (MAGDSEQTLQNHQQPNGGEPFLIG) is disordered. A2 is subject to N-acetylalanine. An ATP-binding site is contributed by 27–35 (GGTASGKSS). 6 residues coordinate substrate: D84, Y112, H117, R166, R176, and Q184. ATP is bound at residue D213. Residues 236 to 261 (RQTNGCLNGYTPSRKRQASESSSRPH) form a disordered region. S254 carries the post-translational modification Phosphoserine.

The protein belongs to the uridine kinase family. In terms of assembly, homotetramer. As to expression, according to PubMed:8812458; testis-specific. According to PubMed:11306702, placenta-specific.

The enzyme catalyses uridine + ATP = UMP + ADP + H(+). The catalysed reaction is cytidine + ATP = CMP + ADP + H(+). The protein operates within pyrimidine metabolism; CTP biosynthesis via salvage pathway; CTP from cytidine: step 1/3. Its pathway is pyrimidine metabolism; UMP biosynthesis via salvage pathway; UMP from uridine: step 1/1. In terms of biological role, phosphorylates uridine and cytidine to uridine monophosphate and cytidine monophosphate. Does not phosphorylate deoxyribonucleosides or purine ribonucleosides. Can use ATP or GTP as a phosphate donor. Can also phosphorylate cytidine and uridine nucleoside analogs such as 6-azauridine, 5-fluorouridine, 4-thiouridine, 5-bromouridine, N(4)-acetylcytidine, N(4)-benzoylcytidine, 5-fluorocytidine, 2-thiocytidine, 5-methylcytidine, and N(4)-anisoylcytidine. This is Uridine-cytidine kinase 2 (UCK2) from Homo sapiens (Human).